Consider the following 282-residue polypeptide: tRNA uridine(34) hydroxylase (282 aa).

The region spanning 128-222 is the Rhodanese domain; the sequence is DGREVVMLDT…YFEEVGADHY (95 aa). Cysteine 182 (cysteine persulfide intermediate) is an active-site residue.

This sequence belongs to the TrhO family.

It carries out the reaction uridine(34) in tRNA + AH2 + O2 = 5-hydroxyuridine(34) in tRNA + A + H2O. In terms of biological role, catalyzes oxygen-dependent 5-hydroxyuridine (ho5U) modification at position 34 in tRNAs. This Ralstonia nicotianae (strain ATCC BAA-1114 / GMI1000) (Ralstonia solanacearum) protein is tRNA uridine(34) hydroxylase.